Consider the following 242-residue polypeptide: MRLDERHYDELRKIEIEAGYITHPEGSVLISAGNTKVICNASIEDRVPPFLRGEGKGWITAEYSMLPRATAQRTIRESSKGKVTGRTMEIQRLIGRALRAVVDLEKLGERTIWIDCDVIQADGGTRTASITGAFVAMTLAIQKLRAEGAIKQNPITDYLAAISVGIDSQQGLLLDLNYEEDSSAEVDMNVIMTGAGRFVELQGTGEEATFSREQLNGLLDLAEKGIKELIEKQKAVTGEVIE.

Phosphate is bound by residues Arg86 and 124 to 126 (GTR).

Belongs to the RNase PH family. In terms of assembly, homohexameric ring arranged as a trimer of dimers.

The enzyme catalyses tRNA(n+1) + phosphate = tRNA(n) + a ribonucleoside 5'-diphosphate. Phosphorolytic 3'-5' exoribonuclease that plays an important role in tRNA 3'-end maturation. Removes nucleotide residues following the 3'-CCA terminus of tRNAs; can also add nucleotides to the ends of RNA molecules by using nucleoside diphosphates as substrates, but this may not be physiologically important. Probably plays a role in initiation of 16S rRNA degradation (leading to ribosome degradation) during starvation. This Bacillus pumilus (strain SAFR-032) protein is Ribonuclease PH.